Consider the following 182-residue polypeptide: Meiotic recombination protein REC104 (182 aa).

As to quaternary structure, interacts with REC114 and SPO11.

Potential transcriptional regulator that is required to activate expression of a number of early meiotic genes including HOP1. The chain is Meiotic recombination protein REC104 (REC104) from Saccharomyces cerevisiae (strain ATCC 204508 / S288c) (Baker's yeast).